The sequence spans 272 residues: uncharacterized protein (272 aa).

2 helical membrane-spanning segments follow: residues 9-29 (GGDI…ASEH) and 252-272 (SHIS…ISFI).

It localises to the membrane. This is an uncharacterized protein from Caenorhabditis elegans.